We begin with the raw amino-acid sequence, 486 residues long: L-carnitine:corrinoid methyltransferase (486 aa).

It belongs to the trimethylamine methyltransferase family. The L-carnitine:THF methyl transfer system is composed of two methyltransferases, MtcB and MtqA, and the corrinoid protein MtqC.

It carries out the reaction Co(I)-[quaternary-amine-specific corrinoid protein] + (R)-carnitine + H(+) = (3R)-4-(dimethylamino)-3-hydroxybutanoate + methyl-Co(III)-[quaternary-amine-specific corrinoid protein]. Involved in the degradation of the quaternary amine L-carnitine. Component of a corrinoid-dependent methyltransferase system that transfers a methyl group from L-carnitine to tetrahydrofolate (THF), forming methyl-THF, a key intermediate in the Wood-Ljungdahl acetogenesis pathway. MtcB catalyzes the methylation of the corrinoid protein MtqC, using L-carnitine as the methyl donor. L-carnitine demethylation generates the unusual biological product norcarnitine, which is likely degraded by other members of the gut microbiota. In vitro, can methylate free cob(I)alamin. This is L-carnitine:corrinoid methyltransferase from Eubacterium limosum.